A 335-amino-acid chain; its full sequence is Geranylgeranyl pyrophosphate synthase BTS1 (335 aa).

Isopentenyl diphosphate is bound by residues Lys-36, Arg-39, and His-68. Asp-75 and Asp-79 together coordinate Mg(2+). Position 84 (Arg-84) interacts with dimethylallyl diphosphate. Arg-85 provides a ligand contact to isopentenyl diphosphate. Positions 169, 170, 206, 213, 223, and 233 each coordinate dimethylallyl diphosphate.

It belongs to the FPP/GGPP synthase family. Mg(2+) serves as cofactor.

The protein resides in the cytoplasm. It carries out the reaction isopentenyl diphosphate + dimethylallyl diphosphate = (2E)-geranyl diphosphate + diphosphate. It catalyses the reaction isopentenyl diphosphate + (2E)-geranyl diphosphate = (2E,6E)-farnesyl diphosphate + diphosphate. The catalysed reaction is isopentenyl diphosphate + (2E,6E)-farnesyl diphosphate = (2E,6E,10E)-geranylgeranyl diphosphate + diphosphate. Its pathway is isoprenoid biosynthesis; farnesyl diphosphate biosynthesis; farnesyl diphosphate from geranyl diphosphate and isopentenyl diphosphate: step 1/1. It participates in isoprenoid biosynthesis; geranyl diphosphate biosynthesis; geranyl diphosphate from dimethylallyl diphosphate and isopentenyl diphosphate: step 1/1. The protein operates within isoprenoid biosynthesis; geranylgeranyl diphosphate biosynthesis; geranylgeranyl diphosphate from farnesyl diphosphate and isopentenyl diphosphate: step 1/1. Its function is as follows. Catalyzes the trans-addition of the 3 molecules of IPP onto DMAPP to form geranylgeranyl pyrophosphate. Required for the membrane attachment of YPT1 and SEC4. May be involved in vesicle trafficking and protein sorting. This Saccharomyces cerevisiae (strain ATCC 204508 / S288c) (Baker's yeast) protein is Geranylgeranyl pyrophosphate synthase BTS1 (BTS1).